The chain runs to 297 residues: N-acetylneuraminate lyase (297 aa).

S47 and T48 together coordinate aceneuramate. Residue Y137 is the Proton donor of the active site. K165 (schiff-base intermediate with substrate) is an active-site residue. The aceneuramate site is built by T167, G189, D191, E192, and S208.

Belongs to the DapA family. NanA subfamily. In terms of assembly, homotetramer.

Its subcellular location is the cytoplasm. The catalysed reaction is aceneuramate = aldehydo-N-acetyl-D-mannosamine + pyruvate. It participates in amino-sugar metabolism; N-acetylneuraminate degradation; D-fructose 6-phosphate from N-acetylneuraminate: step 1/5. Its function is as follows. Catalyzes the reversible aldol cleavage of N-acetylneuraminic acid (sialic acid; Neu5Ac) to form pyruvate and N-acetylmannosamine (ManNAc) via a Schiff base intermediate. This chain is N-acetylneuraminate lyase, found in Salmonella choleraesuis (strain SC-B67).